A 339-amino-acid polypeptide reads, in one-letter code: Glucokinase (339 aa).

ATP is bound at residue 16–21 (GDIGGT).

This sequence belongs to the bacterial glucokinase family.

The protein localises to the cytoplasm. It catalyses the reaction D-glucose + ATP = D-glucose 6-phosphate + ADP + H(+). This Sinorhizobium medicae (strain WSM419) (Ensifer medicae) protein is Glucokinase.